The primary structure comprises 631 residues: MNVLIYNGNGASKICLLRTFQSLLPFVVPLYAMRFVDASTLEKEPWPASTALLVMPGGRDMGYCSSFNETIYRKITDFVKRGGAYLGLCAGGYFGSAVVDFRMPDSDLNVVGKRKLQFFPGTCAGPTFPGFTYDSEDGARRASIIVDGMQSSPVHTHIYFNGGGSFLETENYSNVKVVARYQETDFEKSAAIIYVKVGKGNVVLTGIHPEFSAEGSPILDKRDEKTRLELLSYILKLLGLKVPKDTSKCGQPTLTDQYLFPNNVETKRFIEKALTNKVKNQDEDTLYTFQFSDISSEIPEHQLANLDISADLSDSDNEIVKIWYGDEEKICKKAKPSFDLELYAKLINGCRFGLPIIVAPVIRSTQTLLDKNYRFLDSTNTGFTVLGNYQTAGRGRGQNMWVSPYGTLAFSFIINVDAKNFSTTPIALFQYLMALAVVRGIREYAPGYENIPAFIKWPNDVYVRVDKGGINFQGKQYMKLSGIIVTSNYRKNVLHLVVGCGINVSNLGPTVSLNTLVDEWNKNSDNPRLEKFSFEKLLASVLNQFDRYHRLLLEEGFSLILPEYYQYWLHSNQTVNLASGGKAIIQGITSDFGFLLAQLLNENNEPTTKVVHLQPDGNSFDLMRNLITRKT.

A BPL/LPL catalytic domain is found at 341–553; sequence ELYAKLINGC…QFDRYHRLLL (213 aa).

This sequence belongs to the biotin--protein ligase family. In terms of assembly, monomer.

The protein resides in the cytoplasm. The catalysed reaction is apo-[methylmalonyl-CoA:pyruvate carboxytransferase] + biotin + ATP = holo-[methylmalonyl-CoA:pyruvate carboxytransferase] + AMP + diphosphate + H(+). The enzyme catalyses apo-[propionyl-CoA:carbon-dioxide ligase (ADP-forming)] + biotin + ATP = holo-[propionyl-CoA:carbon-dioxide ligase (ADP-forming)] + AMP + diphosphate + H(+). It catalyses the reaction apo-[3-methylcrotonoyl-CoA:carbon-dioxide ligase (ADP-forming)] + biotin + ATP = holo-[3-methylcrotonoyl-CoA:carbon-dioxide ligase (ADP-forming)] + AMP + diphosphate + H(+). It carries out the reaction biotin + L-lysyl-[protein] + ATP = N(6)-biotinyl-L-lysyl-[protein] + AMP + diphosphate + H(+). In terms of biological role, post-translational modification of specific protein by attachment of biotin. Acts on various carboxylases such as acetyl-CoA-carboxylase, pyruvate carboxylase, propionyl CoA carboxylase, and 3-methylcrotonyl CoA carboxylase. The polypeptide is Biotin--protein ligase (bpl1) (Schizosaccharomyces pombe (strain 972 / ATCC 24843) (Fission yeast)).